The sequence spans 467 residues: tRNA modification GTPase MnmE (467 aa).

Positions 25, 87, and 130 each coordinate (6S)-5-formyl-5,6,7,8-tetrahydrofolate. The 164-residue stretch at 226–389 (GLSVVLAGQP…LRGELLRIAG (164 aa)) folds into the TrmE-type G domain. Asn-236 provides a ligand contact to K(+). Residues 236–241 (NVGKSS), 255–261 (TPIAGTT), and 280–283 (DTAG) contribute to the GTP site. Ser-240 lines the Mg(2+) pocket. The K(+) site is built by Thr-255, Ile-257, and Thr-260. Residue Thr-261 participates in Mg(2+) binding. Lys-467 is a (6S)-5-formyl-5,6,7,8-tetrahydrofolate binding site.

The protein belongs to the TRAFAC class TrmE-Era-EngA-EngB-Septin-like GTPase superfamily. TrmE GTPase family. As to quaternary structure, homodimer. Heterotetramer of two MnmE and two MnmG subunits. K(+) is required as a cofactor.

The protein resides in the cytoplasm. In terms of biological role, exhibits a very high intrinsic GTPase hydrolysis rate. Involved in the addition of a carboxymethylaminomethyl (cmnm) group at the wobble position (U34) of certain tRNAs, forming tRNA-cmnm(5)s(2)U34. This chain is tRNA modification GTPase MnmE, found in Burkholderia mallei (strain NCTC 10247).